The following is a 444-amino-acid chain: Glutamyl-tRNA reductase (444 aa).

Substrate contacts are provided by residues 49-52 (TCNR), Ser109, 114-116 (ETQ), and Gln120. The Nucleophile role is filled by Cys50. 189 to 194 (GAGKMG) is a binding site for NADP(+).

It belongs to the glutamyl-tRNA reductase family. As to quaternary structure, homodimer.

The catalysed reaction is (S)-4-amino-5-oxopentanoate + tRNA(Glu) + NADP(+) = L-glutamyl-tRNA(Glu) + NADPH + H(+). Its pathway is porphyrin-containing compound metabolism; protoporphyrin-IX biosynthesis; 5-aminolevulinate from L-glutamyl-tRNA(Glu): step 1/2. In terms of biological role, catalyzes the NADPH-dependent reduction of glutamyl-tRNA(Glu) to glutamate 1-semialdehyde (GSA). This is Glutamyl-tRNA reductase from Bacillus cereus (strain G9842).